We begin with the raw amino-acid sequence, 370 residues long: MSPLAAAKRLIVKIGSSLLVDDSTGQVRRGWLETLAADIAACKARGQEVIVVSSGAVAVGRRKLGLVPPLKLEEKQAAAATGQIRLAHAWQDALAHHQITVAQVLLTLDDSENRRRYLNARSTLETLLKLGAVPVINENDTVATAEIRVGDNDRLAARVAQMVSADALVLFSDIDGLYTADPRKDPDARFIPEVHELTPEIEAMAGDPGSAYGSGGMVTKLVAARICLSAGCRMAITRGEPMHPLKTIEDGGRCTWFLPNSEPRTARKQWIFGSMKPTGTLVLDAGAARALAQGRSLLPAGITEVSGAFERGDCVLVKDGSGKVLGRGLVAYSADDSRAIMGRKSGEIEAILGFRGRDELIHRDDLVMEG.

Lys13 lines the ATP pocket. The substrate site is built by Ser54, Asp140, and Asn152. ATP is bound by residues 172-173 (SD) and 214-220 (SGGMVTK). The PUA domain occupies 278 to 355 (TGTLVLDAGA…GEIEAILGFR (78 aa)).

Belongs to the glutamate 5-kinase family.

It localises to the cytoplasm. The enzyme catalyses L-glutamate + ATP = L-glutamyl 5-phosphate + ADP. The protein operates within amino-acid biosynthesis; L-proline biosynthesis; L-glutamate 5-semialdehyde from L-glutamate: step 1/2. Its function is as follows. Catalyzes the transfer of a phosphate group to glutamate to form L-glutamate 5-phosphate. The sequence is that of Glutamate 5-kinase from Paramagnetospirillum magneticum (strain ATCC 700264 / AMB-1) (Magnetospirillum magneticum).